The primary structure comprises 123 residues: MPFTTSIQPRRQRLSLYTAPLHLRHKLFNAKLSPDLQKKLGVKRLPVRRGDTVMIMRGDFKGVTGKVVKVDLKKVRIYVEGATRTNSKGQTVYYPIHPSKVMIIDIDTSDKIRQKIIQRRKKE.

It belongs to the universal ribosomal protein uL24 family. In terms of assembly, part of the 50S ribosomal subunit.

Functionally, one of two assembly initiator proteins, it binds directly to the 5'-end of the 23S rRNA, where it nucleates assembly of the 50S subunit. Its function is as follows. Located at the polypeptide exit tunnel on the outside of the subunit. The chain is Large ribosomal subunit protein uL24 from Pyrobaculum islandicum (strain DSM 4184 / JCM 9189 / GEO3).